A 505-amino-acid chain; its full sequence is ATP synthase subunit alpha (505 aa).

169–176 is an ATP binding site; it reads GDRKTGKT.

It belongs to the ATPase alpha/beta chains family. F-type ATPases have 2 components, CF(1) - the catalytic core - and CF(0) - the membrane proton channel. CF(1) has five subunits: alpha(3), beta(3), gamma(1), delta(1), epsilon(1). CF(0) has three main subunits: a(1), b(2) and c(9-12). The alpha and beta chains form an alternating ring which encloses part of the gamma chain. CF(1) is attached to CF(0) by a central stalk formed by the gamma and epsilon chains, while a peripheral stalk is formed by the delta and b chains.

It is found in the cell membrane. It catalyses the reaction ATP + H2O + 4 H(+)(in) = ADP + phosphate + 5 H(+)(out). Its function is as follows. Produces ATP from ADP in the presence of a proton gradient across the membrane. The alpha chain is a regulatory subunit. This Pediococcus pentosaceus (strain ATCC 25745 / CCUG 21536 / LMG 10740 / 183-1w) protein is ATP synthase subunit alpha.